Consider the following 475-residue polypeptide: Ribulose bisphosphate carboxylase large chain (475 aa).

Residues 1–2 (MS) constitute a propeptide that is removed on maturation. Pro3 carries the post-translational modification N-acetylproline. Lys14 carries the N6,N6,N6-trimethyllysine modification. Residues Asn123 and Thr173 each contribute to the substrate site. Lys175 acts as the Proton acceptor in catalysis. Residue Lys177 participates in substrate binding. Positions 201, 203, and 204 each coordinate Mg(2+). Lys201 carries the N6-carboxylysine modification. Residue His294 is the Proton acceptor of the active site. Substrate contacts are provided by Arg295, His327, and Ser379.

The protein belongs to the RuBisCO large chain family. Type I subfamily. Heterohexadecamer of 8 large chains and 8 small chains; disulfide-linked. The disulfide link is formed within the large subunit homodimers. The cofactor is Mg(2+). Post-translationally, the disulfide bond which can form in the large chain dimeric partners within the hexadecamer appears to be associated with oxidative stress and protein turnover.

It localises to the plastid. Its subcellular location is the chloroplast. The enzyme catalyses 2 (2R)-3-phosphoglycerate + 2 H(+) = D-ribulose 1,5-bisphosphate + CO2 + H2O. It carries out the reaction D-ribulose 1,5-bisphosphate + O2 = 2-phosphoglycolate + (2R)-3-phosphoglycerate + 2 H(+). Its function is as follows. RuBisCO catalyzes two reactions: the carboxylation of D-ribulose 1,5-bisphosphate, the primary event in carbon dioxide fixation, as well as the oxidative fragmentation of the pentose substrate in the photorespiration process. Both reactions occur simultaneously and in competition at the same active site. This is Ribulose bisphosphate carboxylase large chain from Corylus cornuta (Beaked hazel).